Here is a 252-residue protein sequence, read N- to C-terminus: Ribosomal RNA small subunit methyltransferase NEP1 (252 aa).

S-adenosyl-L-methionine contacts are provided by residues L180, G207, 212 to 214, and 227 to 232; these read GKD and LSNYPL.

Belongs to the class IV-like SAM-binding methyltransferase superfamily. RNA methyltransferase NEP1 family. As to quaternary structure, homodimer. Interacts with snoRNA U3. Interacts with NOP14 and MPP10. Component of the ribosomal small subunit (SSU) processome composed of at least 40 protein subunits and snoRNA U3.

The protein resides in the nucleus. It localises to the nucleolus. The catalysed reaction is pseudouridine(1191) in yeast 18S rRNA + S-adenosyl-L-methionine = N(1)-methylpseudouridine(1191) in yeast 18S rRNA + S-adenosyl-L-homocysteine + H(+). Its function is as follows. S-adenosyl-L-methionine-dependent pseudouridine N(1)-methyltransferase that methylates pseudouridine at position 1189 (Psi1189) in 18S rRNA. Involved the biosynthesis of the hypermodified N1-methyl-N3-(3-amino-3-carboxypropyl) pseudouridine (m1acp3-Psi) conserved in eukaryotic 18S rRNA. N1-methylation is independent on acp-modification at the N3-position of U1191. Also has an essential role in 40S ribosomal subunit biogenesis independent on its methyltransferase activity, facilitating the incorporation of ribosomal protein S19 (RPS19A/RPS19B) during the formation of pre-ribosomes. This is Ribosomal RNA small subunit methyltransferase NEP1 from Saccharomyces cerevisiae (strain ATCC 204508 / S288c) (Baker's yeast).